A 487-amino-acid chain; its full sequence is MPKVKALQCALALEIRSVTCPGVVLKDKEDIYLSICVFGQYKKTQCVPANFPLVFNARMVFEKVFPEAVDPGDVVAQLEYDTALFELIQLVPPVGETLSTYDENTRDFMFPGPNQISGHHDSNRQVTMRRISGLRGIAPKLEFSTTSVITECLISSRKCRTQDKFVYHTAPVEKPHSRLQNRTSRSQKKKSKSPERNKYCINAKNYEQPTTSKSHSPSPYTKRRMCELSEDTRRRLAHLNLGPYEFKKETDKPPFVIRHVDPPSPRADALFGSPGRDCERDGWSRLHNDHSHLGCYRPKDYKVIRTPHGRDFDESLERCEDYLSSRSCSKPQHSARTLLVHSAPSTMPKHSPSPVLNRASLRERFHSDWCSPSNCDEIHDRVKNVLKSHQAHQRHLYDERDPEKEDELELKRGLLYRDSAYDSDPEYSSFQRPRGTLHLDDGEYWSNRAASYKGKSHRPIFENSMDKIYRNLYKKACSSVSHTQESF.

The signal sequence occupies residues 1–17 (MPKVKALQCALALEIRS). Residues 170–221 (APVEKPHSRLQNRTSRSQKKKSKSPERNKYCINAKNYEQPTTSKSHSPSPYT) are disordered. N-linked (GlcNAc...) asparagine glycosylation is present at Asn-181. The span at 205–219 (NYEQPTTSKSHSPSP) shows a compositional bias: polar residues. Phosphoserine is present on residues Ser-216 and Ser-218. Lys-247 participates in a covalent cross-link: Glycyl lysine isopeptide (Lys-Gly) (interchain with G-Cter in SUMO2). Phosphoserine is present on residues Ser-264, Ser-273, Ser-324, Ser-342, Ser-345, Ser-353, Ser-423, Ser-464, and Ser-486.

It belongs to the SPATA6 family. Interacts with MYL6.

The protein localises to the secreted. Its subcellular location is the cell projection. It is found in the cilium. The protein resides in the flagellum. In terms of biological role, required for formation of the sperm connecting piece during spermiogenesis. Sperm connecting piece is essential for linking the developing flagellum to the head during late spermiogenesis. May be involved in myosin-based microfilament transport through interaction with myosin subunits. This chain is Spermatogenesis-associated protein 6 (SPATA6), found in Bos taurus (Bovine).